The chain runs to 272 residues: Cytosolic Fe-S cluster assembly factor NUBP2 (272 aa).

23–30 (GKGGVGKS) is a binding site for ATP. Cys197 and Cys200 together coordinate [4Fe-4S] cluster.

Belongs to the Mrp/NBP35 ATP-binding proteins family. NUBP2/CFD1 subfamily. Heterotetramer of 2 NUBP1 and 2 NUBP2 chains. [4Fe-4S] cluster serves as cofactor.

Its subcellular location is the cytoplasm. In terms of biological role, component of the cytosolic iron-sulfur (Fe/S) protein assembly (CIA) machinery. Required for maturation of extramitochondrial Fe-S proteins. The NUBP1-NUBP2 heterotetramer forms a Fe-S scaffold complex, mediating the de novo assembly of an Fe-S cluster and its transfer to target apoproteins. The protein is Cytosolic Fe-S cluster assembly factor NUBP2 of Gallus gallus (Chicken).